The chain runs to 208 residues: MGTGGSLLCGCSLVLSCLCPSASLPDPGNSTWPPGAQAGLPAALALPLPRLPRILFPMAGRPARPSSDFVGCAQGMCCHGRQGTVHIHTSSVSCWTPCPVTGTGGTAVSRKDRVLPHRRQVSLACVCAVGERAGQLWSQKPVQMARPSARHLLPRGSSPNSQAVLLPSVCPVPWPPVGPSPGQGEGLSPAFPGVGTDRGDSWALVLQV.

The first 23 residues, 1 to 23 (MGTGGSLLCGCSLVLSCLCPSAS), serve as a signal peptide directing secretion. The N-linked (GlcNAc...) asparagine glycan is linked to N29.

It localises to the secreted. The protein is Putative chemokine-related protein FP248 of Homo sapiens (Human).